Consider the following 933-residue polypeptide: Potassium voltage-gated channel subfamily KQT member 5 (933 aa).

The Cytoplasmic portion of the chain corresponds to 1 to 126 (MPRHHAGGEE…YNVLERPRGW (126 aa)). At Ser-89 the chain carries Phosphoserine. Residues 127–147 (AFVYHAFVFLLVFGCLILSVF) form a helical membrane-spanning segment. Topologically, residues 148–157 (STIPEHTKLA) are extracellular. A helical transmembrane segment spans residues 158–178 (SSCLLILEFVMIVVFGLEFII). At 179 to 201 (RIWSAGCCCRYRGWQGRLRFARK) the chain is on the cytoplasmic side. The helical transmembrane segment at 202 to 222 (PFCVIDTIVLIASIAVVSAKT) threads the bilayer. Topologically, residues 223-230 (QGNIFATS) are extracellular. Residues 231–253 (ALRSLRFLQILRMVRMDRRGGTW) form a helical; Voltage-sensor membrane-spanning segment. Residues Arg-249 and Lys-265 each contribute to the a 1,2-diacyl-sn-glycero-3-phospho-(1D-myo-inositol-4,5-bisphosphate) site. Topologically, residues 254–267 (KLLGSVVYAHSKEL) are cytoplasmic. The helical transmembrane segment at 268–288 (ITAWYIGFLVLIFSSFLVYLV) threads the bilayer. The Extracellular portion of the chain corresponds to 289–299 (EKDANKEFSTY). The segment at residues 300 to 320 (ADALWWGTITLTTIGYGDKTP) is an intramembrane region (pore-forming). At 321–326 (LTWLGR) the chain is on the extracellular side. Residues 327 to 347 (LLSAGFALLGISFFALPAGIL) traverse the membrane as a helical segment. The Cytoplasmic segment spans residues 348–933 (GSGFALKVQE…ALSLPHVKLN (586 aa)). Lys-362 serves as a coordination point for a 1,2-diacyl-sn-glycero-3-phospho-(1D-myo-inositol-4,5-bisphosphate). The interaction with CALM stretch occupies residues 371 to 379 (AANLIQCVW). A disordered region spans residues 405 to 465 (SPTKKEQGEA…EGSPTKVQKS (61 aa)). Residues 432-441 (RGQSIKSRQA) show a composition bias toward polar residues. Ser-448 is subject to Phosphoserine. Residues 522 to 529 (VIRAIRIM) are interaction with CALM. The interval 578–598 (KGQMTSDKKSREKITAEHETT) is disordered. Over residues 583-598 (SDKKSREKITAEHETT) the composition is skewed to basic and acidic residues. Residue Ser-832 is modified to Phosphoserine. The tract at residues 878–933 (GAEETETDTFDGTPPPAGEAAFSSDSLRTGRSRSSQNICKTGDSTDALSLPHVKLN) is disordered. Residues 900 to 924 (SSDSLRTGRSRSSQNICKTGDSTDA) show a composition bias toward polar residues.

The protein belongs to the potassium channel family. KQT (TC 1.A.1.15) subfamily. Kv7.5/KCNQ5 sub-subfamily. In terms of assembly, homotetramer; forms a functional homotetrameric channel resulting in the expression of a small M-current. Heterotetramer with KCNQ3; forms heterotetrameric M-channel responsible for the native M-current. Heterotetramer with KCNQ1; forms a functional voltage-gated potassium channel. Interacts (via C-terminus) with calmodulin/CALM; forms a heterooctameric structure (with 4:4 KCNQ1:CALM stoichiometry); the interaction is calcium-independent, constitutive and participates in the channel function. As to expression, strongly expressed in brain. Also expressed in colon, lung and uterus.

The protein resides in the cell membrane. It catalyses the reaction K(+)(in) = K(+)(out). Its activity is regulated as follows. Phosphatidylinositol-4,5-bisphosphate (PIP2) is essential to activate KCNQ5 channel by inducing the coupling of the voltage-sensing domain (VSD) and the pore-forming domain (PD). Calcium suppresses KCNQ5 channel current through calcium-bound CALM C-terminus. Therefore CALM acts as calcium sensor that controls channel activity. Zinc potentiates channel activity in a pH-dependent manner. The activity is modulated by small changes in cell volume. Activated by the anticonvulsant retigabine. Inhibited by linopirdine and XE991. Its function is as follows. Pore-forming subunit of the voltage-gated potassium (Kv) channel broadly expressed in brain and skeletal muscle and involved in the regulation of neuronal excitability. Associates with KCNQ3/Kv7.3 pore-forming subunit to form a potassium channel which contributes to M-type current, a slowly activating and deactivating potassium conductance which plays a critical role in determining the subthreshold electrical excitability of neurons. Contributes, with other potassium channels, to the molecular diversity of a heterogeneous population of M-channels, varying in kinetic and pharmacological properties, which underlie this physiologically important current. Also forms a functional channel with KCNQ1/Kv7.1 subunit that may contribute to vasoconstriction and hypertension. Channel may be selectively permeable in vitro to other cations besides potassium, in decreasing order of affinity K(+) = Rb(+) &gt; Cs(+) &gt; Na(+). The chain is Potassium voltage-gated channel subfamily KQT member 5 from Mus musculus (Mouse).